Reading from the N-terminus, the 134-residue chain is Large ribosomal subunit protein eL32 (134 aa).

The protein belongs to the eukaryotic ribosomal protein eL32 family.

This Drosophila affinis (Fruit fly) protein is Large ribosomal subunit protein eL32 (RpL32).